The following is a 238-amino-acid chain: ATP synthase subunit a (238 aa).

4 helical membrane-spanning segments follow: residues 17–37, 80–100, 112–132, and 194–214; these read LSNILMITVTCVIVLLIAIIC, ITLLMFIFVANMLGLPFQIAI, DPIVTLTLAIMVLGLTHYYGI, and IFVGVLAIIPALLWQGFSIFI.

It belongs to the ATPase A chain family. In terms of assembly, F-type ATPases have 2 components, CF(1) - the catalytic core - and CF(0) - the membrane proton channel. CF(1) has five subunits: alpha(3), beta(3), gamma(1), delta(1), epsilon(1). CF(0) has three main subunits: a(1), b(2) and c(9-12). The alpha and beta chains form an alternating ring which encloses part of the gamma chain. CF(1) is attached to CF(0) by a central stalk formed by the gamma and epsilon chains, while a peripheral stalk is formed by the delta and b chains.

Its subcellular location is the cell membrane. In terms of biological role, key component of the proton channel; it plays a direct role in the translocation of protons across the membrane. The chain is ATP synthase subunit a from Listeria welshimeri serovar 6b (strain ATCC 35897 / DSM 20650 / CCUG 15529 / CIP 8149 / NCTC 11857 / SLCC 5334 / V8).